We begin with the raw amino-acid sequence, 629 residues long: Coiled-coil domain-containing protein 120 (629 aa).

The segment at 31–70 (RLRGLLDRQRALQEALSVKLQELRKVCLQEAELTGQLPPE) is involved in CYTH2-binding. Residues 109–173 (ELALEALERE…LRDFRARLGL (65 aa)) are a coiled coil. Composition is skewed to low complexity over residues 209-219 (HSESSSLSESG) and 279-294 (ASPT…SASS). The segment at 209–356 (HSESSSLSES…LFAARTRRSN (148 aa)) is disordered. A compositionally biased stretch (polar residues) spans 323 to 332 (RQWSGSQDSQ). A phosphoserine mark is found at Ser-355 and Ser-357. 2 disordered regions span residues 399–432 (QPVP…GAPR) and 602–629 (PSQA…FTDG). The segment covering 418–432 (ARPSSAAPASRGAPR) has biased composition (low complexity). Arg-432 bears the Omega-N-methylarginine mark.

Interacts with NIN and CEP170; leading to recruit them to centrosomes. Interacts with CYTH2; this interaction is direct and stabilizes CCDC120, possibly by preventing ubiquitination. Ubiquitinated; interaction with CYTH2 may prevent ubiquitination.

The protein resides in the cytoplasm. The protein localises to the cytoskeleton. It is found in the microtubule organizing center. Its subcellular location is the centrosome. It localises to the centriole. The protein resides in the cell projection. The protein localises to the neuron projection. It is found in the growth cone. Its subcellular location is the endosome. Centriolar protein required for centriole subdistal appendage assembly and microtubule anchoring in interphase cells. Together with CCDC68, cooperate with subdistal appendage components ODF2, NIN and CEP170 for hierarchical subdistal appendage assembly. Recruits NIN and CEP170 to centrosomes. Also required for neurite growth. Localizes CYTH2 to vesicles to allow its transport along neurites, and subsequent ARF6 activation and neurite growth. The protein is Coiled-coil domain-containing protein 120 of Mus musculus (Mouse).